A 92-amino-acid chain; its full sequence is PqqA binding protein (92 aa).

This sequence belongs to the PqqD family. As to quaternary structure, monomer. Interacts with PqqE.

The protein operates within cofactor biosynthesis; pyrroloquinoline quinone biosynthesis. Its function is as follows. Functions as a PqqA binding protein and presents PqqA to PqqE, in the pyrroloquinoline quinone (PQQ) biosynthetic pathway. The polypeptide is PqqA binding protein (Xanthomonas axonopodis pv. citri (strain 306)).